Here is a 197-residue protein sequence, read N- to C-terminus: MQIVLASQSPSRRRILNSAGVEPLIHPADVDEDALLHSLNGSAPEEIVRQLALAKAQVVAPSYPGDVVIGGDSMLLIDATLQGKPHTREATIERWKQQRGNKATLITGHAIIFGDEVIVESSSTNIHFAEASDVDIERYADSGEPLECAGAFTLEALGGWFIDSIEGDPSSVIGLSLPVVRRALYRLGFNASDFWNM.

D72 acts as the Proton acceptor in catalysis.

This sequence belongs to the Maf family. Requires a divalent metal cation as cofactor.

The protein resides in the cytoplasm. The enzyme catalyses a ribonucleoside 5'-triphosphate + H2O = a ribonucleoside 5'-phosphate + diphosphate + H(+). The catalysed reaction is a 2'-deoxyribonucleoside 5'-triphosphate + H2O = a 2'-deoxyribonucleoside 5'-phosphate + diphosphate + H(+). Functionally, nucleoside triphosphate pyrophosphatase. May have a dual role in cell division arrest and in preventing the incorporation of modified nucleotides into cellular nucleic acids. In Corynebacterium glutamicum (strain ATCC 13032 / DSM 20300 / JCM 1318 / BCRC 11384 / CCUG 27702 / LMG 3730 / NBRC 12168 / NCIMB 10025 / NRRL B-2784 / 534), this protein is Nucleoside triphosphate pyrophosphatase.